A 328-amino-acid chain; its full sequence is MSSTPLKVAVTGAAGQIGYSLLFRLASGSLLGDRPIELRLLEITPALKALEGVVMELDDCAFPNLAGVQIGDDAEQIFDGVNLALLVGARPRGPGMERGDLLSANGAIFTAQGKALNKVAADDVRIGVTGNPANTNALIAMTNAPDIPQARFSALTRLDHNRAISQLAAKTGAAVTDIKKMTIWGNHSATQYPDVFHAEIGGRNAAEVVGDQDWIESTFIPTVAKRGAAIIEARGSSSAASAASATIDAARDWLFGSADADWVSMAVVSDGSYGVPEGLISSFPVTTKDGDWEIVQGLEIDDFSRAKIDASTAELADEREAVKELGLI.

Residue 12–18 (GAAGQIG) coordinates NAD(+). R92 and R98 together coordinate substrate. Residues N105, Q112, and 129–131 (TGN) contribute to the NAD(+) site. 2 residues coordinate substrate: N131 and R162. H187 functions as the Proton acceptor in the catalytic mechanism.

The protein belongs to the LDH/MDH superfamily. MDH type 2 family.

The enzyme catalyses (S)-malate + NAD(+) = oxaloacetate + NADH + H(+). Its function is as follows. Catalyzes the reversible oxidation of malate to oxaloacetate. The sequence is that of Malate dehydrogenase from Nocardioides sp. (strain ATCC BAA-499 / JS614).